The following is a 129-amino-acid chain: GM1b/asialo-GM1 oligosaccharide-binding R-type lectin (129 aa).

Residues 21-23 (FYN), 26-28 (RKD), Phe32, and 37-40 (YDDQ) contribute to the a carbohydrate site.

Homodimer. Highest expression in the outer part of the mantle rim. Highly expressed in gills, with a much lower expression in the digestive gland and posterior adductor muscle. Scarcely detectable in foot.

Hemagglutination activity requires divalent cations such as Ca(2+). Hemagglutination activity is weakly inhibited by monosaccharides such as D-Gal (25 mM), D-GalNAc (25 mM) and D-Fuc (25 mM) and by disaccharides such as melibiose (25 mM) and lactose (25 mM). Hemagglutination activity is inhibited by bovine submaxillary mucin, but not by porcine stomach mucin or fetuin. Functionally, galbeta1-3GalNAcbeta1-4Galbeta1-4Glc oligosaccharide-binding lectin. Binds strongly to the oligosaccharides of ganglioside GM1b and to a lesser extent its precursor asialo-GM1. Binds weakly to asialo-GM2 oligosaccharide and to the glycan moiety of globo-series stage-specific embryonal antigen 4 (SSEA-4) hexaose. Binds galactose, N-acetylgalactose and lactose. Does not bind GM1. Does not bind to Gal-beta1,3-GalNAc (Thomsen-Friedenreich antigen), the oligosaccharide of GM1a ganglioside or SSEA-4 tetraose. Does not bind to N-glycans, O-glycans or glycosaminoglycans of glycoproteins. Does not bind Lewis glycans, derivatives of lactose or N-acetyllactosamine or blood group (ABH-type) oligosaccharides. Does not bind glucose. Has hemagglutination activity towards rabbit erythrocytes. Displays cytotoxic effects against various cultured cell lines including human breast (MCF-7), cervical (HeLa) and colon cancer (Caco2) cell lines, as well as dog kidney (MDCK) cell line that express asialo-GM1 oligosaccharide at their cell surface. Shows dose- and time-dependent activation of MKK3/6, ERK1/2 and p38 MAPK, as well as caspase-3/9 in HeLa cervical cancer cells. No cytotoxic effect on BT474 human breast cancer cell line. May be involved in recognition of glycans found on parasitic or symbiotic microorganisms. This is GM1b/asialo-GM1 oligosaccharide-binding R-type lectin from Mytilisepta virgata (Purplish bifurcate mussel).